The chain runs to 579 residues: Proline--tRNA ligase (579 aa).

The protein belongs to the class-II aminoacyl-tRNA synthetase family. ProS type 1 subfamily. In terms of assembly, homodimer.

Its subcellular location is the cytoplasm. The catalysed reaction is tRNA(Pro) + L-proline + ATP = L-prolyl-tRNA(Pro) + AMP + diphosphate. Functionally, catalyzes the attachment of proline to tRNA(Pro) in a two-step reaction: proline is first activated by ATP to form Pro-AMP and then transferred to the acceptor end of tRNA(Pro). As ProRS can inadvertently accommodate and process non-cognate amino acids such as alanine and cysteine, to avoid such errors it has two additional distinct editing activities against alanine. One activity is designated as 'pretransfer' editing and involves the tRNA(Pro)-independent hydrolysis of activated Ala-AMP. The other activity is designated 'posttransfer' editing and involves deacylation of mischarged Ala-tRNA(Pro). The misacylated Cys-tRNA(Pro) is not edited by ProRS. The protein is Proline--tRNA ligase of Hamiltonella defensa subsp. Acyrthosiphon pisum (strain 5AT).